The sequence spans 349 residues: 2-oxoglutarate and iron-dependent oxygenase domain-containing protein 2 (349 aa).

Residues 211-305 enclose the Fe2OG dioxygenase domain; it reads DSHRAFVVKY…RWNLILWMRA (95 aa). Fe cation contacts are provided by H231, D233, and H286. 2-oxoglutarate is bound at residue R296.

This sequence belongs to the OGFOD2 family. The cofactor is Fe(2+). It depends on L-ascorbate as a cofactor.

The protein is 2-oxoglutarate and iron-dependent oxygenase domain-containing protein 2 (ogfod2) of Xenopus tropicalis (Western clawed frog).